The chain runs to 348 residues: Dihydroorotase (348 aa).

2 residues coordinate Zn(2+): H17 and H19. Substrate-binding positions include 19–21 (HLR) and N45. K103, H140, and H178 together coordinate Zn(2+). K103 carries the post-translational modification N6-carboxylysine. H140 contacts substrate. L223 serves as a coordination point for substrate. D251 is a binding site for Zn(2+). The active site involves D251. Substrate-binding residues include H255 and A267.

It belongs to the metallo-dependent hydrolases superfamily. DHOase family. Class II DHOase subfamily. Homodimer. It depends on Zn(2+) as a cofactor.

The enzyme catalyses (S)-dihydroorotate + H2O = N-carbamoyl-L-aspartate + H(+). The protein operates within pyrimidine metabolism; UMP biosynthesis via de novo pathway; (S)-dihydroorotate from bicarbonate: step 3/3. Functionally, catalyzes the reversible cyclization of carbamoyl aspartate to dihydroorotate. In Salmonella paratyphi A (strain ATCC 9150 / SARB42), this protein is Dihydroorotase.